The primary structure comprises 170 residues: MENIVLIGMPLSGKSTLGREISKILKYDLIDTDTLIEKMEGKSIKEIFKIYGEDYFREKELEIINKLKKESNKVISTGGGLPIYNKNIYELKKIGFTVYLKVPLEELIKRMVKKGEDTRPLLKNNDTKFLEEMYKNRIEIYEKAHTIICNTNHEESLITIVRAYKKWKGI.

ATP is bound at residue 11–16 (LSGKST). Serine 15 is a binding site for Mg(2+). Aspartate 33, arginine 57, and glycine 79 together coordinate substrate. Arginine 119 serves as a coordination point for ATP. A substrate-binding site is contributed by arginine 137.

The protein belongs to the shikimate kinase family. In terms of assembly, monomer. Requires Mg(2+) as cofactor.

The protein localises to the cytoplasm. The catalysed reaction is shikimate + ATP = 3-phosphoshikimate + ADP + H(+). It functions in the pathway metabolic intermediate biosynthesis; chorismate biosynthesis; chorismate from D-erythrose 4-phosphate and phosphoenolpyruvate: step 5/7. Catalyzes the specific phosphorylation of the 3-hydroxyl group of shikimic acid using ATP as a cosubstrate. The sequence is that of Shikimate kinase from Clostridium botulinum (strain 657 / Type Ba4).